Reading from the N-terminus, the 199-residue chain is MTDLAELGETIKAALPAAVSNASIAFGELTLTVDAAKIVEVVRFLRDDPRCRFISPIDVTAVDYPGRANRFDVVWHFLSPSLNTRIRLRAEASETTQVPSLIDLFPGVDWFEREAYDLYGVIFTGHPDMRRILTDYGFDGHPLRKDFPLSGFVEVRYDDDEKRVVYEPVRLNQEFRKFDFLSPWEGADYPLPGDEKRSE.

The protein belongs to the complex I 30 kDa subunit family. As to quaternary structure, NDH-1 is composed of 14 different subunits. Subunits NuoB, C, D, E, F, and G constitute the peripheral sector of the complex.

It is found in the cell inner membrane. It catalyses the reaction a quinone + NADH + 5 H(+)(in) = a quinol + NAD(+) + 4 H(+)(out). Its function is as follows. NDH-1 shuttles electrons from NADH, via FMN and iron-sulfur (Fe-S) centers, to quinones in the respiratory chain. The immediate electron acceptor for the enzyme in this species is believed to be ubiquinone. Couples the redox reaction to proton translocation (for every two electrons transferred, four hydrogen ions are translocated across the cytoplasmic membrane), and thus conserves the redox energy in a proton gradient. This Rhodopseudomonas palustris (strain BisB18) protein is NADH-quinone oxidoreductase subunit C.